Consider the following 544-residue polypeptide: L-aspartate oxidase (544 aa).

FAD is bound by residues 17–20 (SGGA), K39, 46–53 (STFYAQGG), and D221. R288 acts as the Proton donor/acceptor in catalysis. Residues E373 and 389–390 (SL) contribute to the FAD site.

It belongs to the FAD-dependent oxidoreductase 2 family. NadB subfamily. FAD serves as cofactor.

It localises to the cytoplasm. The catalysed reaction is L-aspartate + O2 = iminosuccinate + H2O2. It functions in the pathway cofactor biosynthesis; NAD(+) biosynthesis; iminoaspartate from L-aspartate (oxidase route): step 1/1. In terms of biological role, catalyzes the oxidation of L-aspartate to iminoaspartate, the first step in the de novo biosynthesis of NAD(+). The chain is L-aspartate oxidase from Acinetobacter baylyi (strain ATCC 33305 / BD413 / ADP1).